We begin with the raw amino-acid sequence, 430 residues long: Terminal nucleotidyltransferase 5B (430 aa).

The disordered stretch occupies residues M1–G46. Low complexity predominate over residues A15–S44.

Belongs to the TENT family.

It is found in the cytoplasm. The protein localises to the nucleus. The catalysed reaction is RNA(n) + ATP = RNA(n)-3'-adenine ribonucleotide + diphosphate. Catalyzes the transfer of one adenosine molecule from an ATP to an mRNA poly(A) tail bearing a 3'-OH terminal group in an ATP hydrolysis-dependent manner. May be involved in maintaining the translation efficiency of at least some genes through preventing degradation of their mRNAs. Prefers RNA molecules that are adenosine-rich close to 3'-end. In addition, may inhibit cell proliferation and cell cycle progression through ubiquitination of beta-catenin/CTNNB1. The chain is Terminal nucleotidyltransferase 5B from Bos taurus (Bovine).